The primary structure comprises 160 residues: 6,7-dimethyl-8-ribityllumazine synthase (160 aa).

5-amino-6-(D-ribitylamino)uracil-binding positions include Trp26, 58 to 60, and 80 to 82; these read AIE and VVI. 85–86 provides a ligand contact to (2S)-2-hydroxy-3-oxobutyl phosphate; that stretch reads ET. The Proton donor role is filled by His88. Position 113 (Asn113) interacts with 5-amino-6-(D-ribitylamino)uracil. A (2S)-2-hydroxy-3-oxobutyl phosphate-binding site is contributed by Arg127.

This sequence belongs to the DMRL synthase family. Homopentamer.

It carries out the reaction (2S)-2-hydroxy-3-oxobutyl phosphate + 5-amino-6-(D-ribitylamino)uracil = 6,7-dimethyl-8-(1-D-ribityl)lumazine + phosphate + 2 H2O + H(+). Its pathway is cofactor biosynthesis; riboflavin biosynthesis; riboflavin from 2-hydroxy-3-oxobutyl phosphate and 5-amino-6-(D-ribitylamino)uracil: step 1/2. Functionally, catalyzes the formation of 6,7-dimethyl-8-ribityllumazine by condensation of 5-amino-6-(D-ribitylamino)uracil with 3,4-dihydroxy-2-butanone 4-phosphate. This is the penultimate step in the biosynthesis of riboflavin. The polypeptide is 6,7-dimethyl-8-ribityllumazine synthase (Mycobacteroides abscessus (strain ATCC 19977 / DSM 44196 / CCUG 20993 / CIP 104536 / JCM 13569 / NCTC 13031 / TMC 1543 / L948) (Mycobacterium abscessus)).